Consider the following 106-residue polypeptide: Phosphoribosyl-ATP pyrophosphatase (106 aa).

This sequence belongs to the PRA-PH family.

It is found in the cytoplasm. It catalyses the reaction 1-(5-phospho-beta-D-ribosyl)-ATP + H2O = 1-(5-phospho-beta-D-ribosyl)-5'-AMP + diphosphate + H(+). The protein operates within amino-acid biosynthesis; L-histidine biosynthesis; L-histidine from 5-phospho-alpha-D-ribose 1-diphosphate: step 2/9. The polypeptide is Phosphoribosyl-ATP pyrophosphatase (Methylobacillus flagellatus (strain ATCC 51484 / DSM 6875 / VKM B-1610 / KT)).